A 695-amino-acid polypeptide reads, in one-letter code: Highly divergent homeobox (695 aa).

2 DNA-binding regions (homeobox) span residues 3-63 and 440-503; these read LRSV…SSKS and ALQD…RLMG. A disordered region spans residues 56 to 81; the sequence is RRKMSSKSALESGGAPPGTAHTAPSV. The interval 653 to 695 is disordered; sequence QQALLSDLPPELEEMDFNHTSPEPDDTSFSLSSLSEKNASDSL. Positions 679–695 are enriched in polar residues; the sequence is TSFSLSSLSEKNASDSL.

It localises to the nucleus. The polypeptide is Highly divergent homeobox (HDX) (Gallus gallus (Chicken)).